Reading from the N-terminus, the 207-residue chain is Large ribosomal subunit protein uL4 (207 aa).

The segment at 49 to 78 (HAVKNRSAVSGGGRKPWRQKGTGRARQGSI) is disordered.

This sequence belongs to the universal ribosomal protein uL4 family. In terms of assembly, part of the 50S ribosomal subunit.

Its function is as follows. One of the primary rRNA binding proteins, this protein initially binds near the 5'-end of the 23S rRNA. It is important during the early stages of 50S assembly. It makes multiple contacts with different domains of the 23S rRNA in the assembled 50S subunit and ribosome. In terms of biological role, forms part of the polypeptide exit tunnel. The polypeptide is Large ribosomal subunit protein uL4 (Streptococcus thermophilus (strain CNRZ 1066)).